Consider the following 96-residue polypeptide: Dynein light chain roadblock-type 1 (96 aa).

Ala-2 carries the N-acetylalanine modification.

This sequence belongs to the GAMAD family. Homodimer. The cytoplasmic dynein 1 complex consists of two catalytic heavy chains (HCs) and a number of non-catalytic subunits presented by intermediate chains (ICs), light intermediate chains (LICs) and light chains (LCs); the composition seems to vary in respect to the IC, LIC and LC composition. The heavy chain homodimer serves as a scaffold for the probable homodimeric assembly of the respective non-catalytic subunits. The ICs and LICs bind directly to the HC dimer and the LCs assemble on the IC dimer. Interacts with DYNLRB2. Interacts with DYNC1I1 and DYNC1I2. Interacts with RAB6A isoform 1 (GTP-bound); the interaction is direct. Interacts with RAB6A isoform 2 (GDP-bound); the interaction is direct. Interacts with RAB6B (GDP-bound).

Its subcellular location is the cytoplasm. It is found in the cytoskeleton. Functionally, acts as one of several non-catalytic accessory components of the cytoplasmic dynein 1 complex that are thought to be involved in linking dynein to cargos and to adapter proteins that regulate dynein function. Cytoplasmic dynein 1 acts as a motor for the intracellular retrograde motility of vesicles and organelles along microtubules. This is Dynein light chain roadblock-type 1 (Dynlrb1) from Mus musculus (Mouse).